The primary structure comprises 815 residues: Polyribonucleotide nucleotidyltransferase (815 aa).

2 residues coordinate Mg(2+): Asp-489 and Asp-495. Positions 556-615 (PRFYTLQIPTDKIRDLIGPGGKVIRGIVEATGVKIDVEDSGKVNVASSDQEAAKKALKMI) constitute a KH domain. The 68-residue stretch at 625-692 (GKTYLGTVTR…DGNRIKLSRK (68 aa)) folds into the S1 motif domain. A disordered region spans residues 700–815 (AKMATEGGGD…GGGGGGRGRG (116 aa)). Gly residues predominate over residues 723–734 (APGGVTFEGGYE). The segment covering 735–745 (GGDEPEVEEGE) has biased composition (acidic residues). The span at 775 to 815 (PHGGGGGAGRGGRGRRPGGGGGGGRGGHGGRGGGGGGRGRG) shows a compositional bias: gly residues.

It belongs to the polyribonucleotide nucleotidyltransferase family. The cofactor is Mg(2+).

The protein localises to the cytoplasm. The catalysed reaction is RNA(n+1) + phosphate = RNA(n) + a ribonucleoside 5'-diphosphate. Functionally, involved in mRNA degradation. Catalyzes the phosphorolysis of single-stranded polyribonucleotides processively in the 3'- to 5'-direction. This Koribacter versatilis (strain Ellin345) protein is Polyribonucleotide nucleotidyltransferase.